The chain runs to 105 residues: Putative pterin-4-alpha-carbinolamine dehydratase (105 aa).

The protein belongs to the pterin-4-alpha-carbinolamine dehydratase family.

It carries out the reaction (4aS,6R)-4a-hydroxy-L-erythro-5,6,7,8-tetrahydrobiopterin = (6R)-L-erythro-6,7-dihydrobiopterin + H2O. This is Putative pterin-4-alpha-carbinolamine dehydratase from Sinorhizobium medicae (strain WSM419) (Ensifer medicae).